A 322-amino-acid polypeptide reads, in one-letter code: GRB2-related adaptor protein 2 (322 aa).

Residues 1–56 (MEATAKFDFMASGEDELSFRTGDILKILSNQEEWLKAELGSQEGYVPKNFIDIEFP) enclose the SH3 1 domain. Tyr-45 is modified (phosphotyrosine). Positions 58–149 (WFHEGLSRHQ…QKQVFLRDGT (92 aa)) constitute an SH2 domain. The residue at position 106 (Lys-106) is an N6-acetyllysine. Residues 143–216 (VFLRDGTQDQ…TPGPQPPQQQ (74 aa)) are disordered. A compositionally biased stretch (basic and acidic residues) spans 148–163 (GTQDQGHRGNSLDRRS). The residue at position 186 (Ser-186) is a Phosphoserine. The span at 193–204 (PQQFHPHQQPSP) shows a compositional bias: low complexity. Position 230 is a phosphoserine (Ser-230). Thr-254 is subject to Phosphothreonine. The region spanning 263-322 (GRVRWARALYDFEALEEDELGFRSGEVVEVLDSSNPSWWTGRLHNKLGLFPANYVAPMMR) is the SH3 2 domain.

It belongs to the GRB2/sem-5/DRK family. Interacts with phosphorylated LAT and LAX1 upon TCR activation. Interacts with SHB. Interacts with PTPN23. Interacts with phosphorylated LIME1 upon TCR activation.

The protein localises to the nucleus. The protein resides in the cytoplasm. It localises to the endosome. Interacts with SLP-76 to regulate NF-AT activation. Binds to tyrosine-phosphorylated shc. The chain is GRB2-related adaptor protein 2 (Grap2) from Mus musculus (Mouse).